The sequence spans 311 residues: Aspartate carbamoyltransferase catalytic subunit (311 aa).

Residues Arg-58 and Thr-59 each contribute to the carbamoyl phosphate site. Lys-86 contacts L-aspartate. Arg-108, His-136, and Gln-139 together coordinate carbamoyl phosphate. L-aspartate is bound by residues Arg-169 and Arg-223. Positions 264 and 265 each coordinate carbamoyl phosphate.

It belongs to the aspartate/ornithine carbamoyltransferase superfamily. ATCase family. In terms of assembly, heterododecamer (2C3:3R2) of six catalytic PyrB chains organized as two trimers (C3), and six regulatory PyrI chains organized as three dimers (R2).

It catalyses the reaction carbamoyl phosphate + L-aspartate = N-carbamoyl-L-aspartate + phosphate + H(+). It functions in the pathway pyrimidine metabolism; UMP biosynthesis via de novo pathway; (S)-dihydroorotate from bicarbonate: step 2/3. In terms of biological role, catalyzes the condensation of carbamoyl phosphate and aspartate to form carbamoyl aspartate and inorganic phosphate, the committed step in the de novo pyrimidine nucleotide biosynthesis pathway. In Acidiphilium cryptum (strain JF-5), this protein is Aspartate carbamoyltransferase catalytic subunit.